A 191-amino-acid chain; its full sequence is General negative regulator of transcription subunit 2 (191 aa).

This sequence belongs to the CNOT2/3/5 family. Forms a NOT protein complex that comprises NOT1, NOT2, NOT3, NOT4 and NOT5. Subunit of the 1.0 MDa CCR4-NOT core complex that contains CCR4, CAF1, NOT1, NOT2, NOT3, NOT4, NOT5, CAF40 and CAF130. In the complex interacts with NOT1 and NOT5. The core complex probably is part of a less characterized 1.9 MDa CCR4-NOT complex.

The protein resides in the cytoplasm. It is found in the nucleus. Its function is as follows. Acts as a component of the CCR4-NOT core complex, which in the nucleus seems to be a general transcription factor, and in the cytoplasm the major mRNA deadenylase involved in mRNA turnover. NOT2 is required for the integrity of the complex. The NOT protein subcomplex negatively regulates the basal and activated transcription of many genes. Preferentially affects TC-type TATA element-dependent transcription. Could directly or indirectly inhibit component(s) of the general transcription machinery. The sequence is that of General negative regulator of transcription subunit 2 (CDC36) from Saccharomyces cerevisiae (strain ATCC 204508 / S288c) (Baker's yeast).